A 354-amino-acid polypeptide reads, in one-letter code: Protein YGP1 (354 aa).

The N-terminal stretch at Met1 to Ala19 is a signal peptide. Residues Ser20–Lys37 constitute a propeptide that is removed on maturation. N-linked (GlcNAc...) asparagine glycans are attached at residues Asn40, Asn50, Asn53, Asn58, Asn61, Asn65, Asn87, Asn94, Asn100, Asn106, Asn118, Asn172, Asn239, and Asn286. The 305-residue stretch at Asn50–Pro354 folds into the Asparaginase/glutaminase domain.

To yeast sporulation-specific protein SPS100. Extensively N-glycosylated.

Its subcellular location is the secreted. Its function is as follows. May be involved in cellular adaptations prior to stationary phase. The chain is Protein YGP1 (YGP1) from Saccharomyces cerevisiae (strain ATCC 204508 / S288c) (Baker's yeast).